The sequence spans 382 residues: Intermediate transcription factor 3 large subunit (382 aa).

The protein belongs to the orthopoxvirus OPG150 family. As to quaternary structure, heterodimerizes with protein A8 to form the virus intermediate transcription factor (VITF)-3.

In terms of biological role, acts with RNA polymerase to initiate transcription from intermediate gene promoters. This is Intermediate transcription factor 3 large subunit (OPG150) from Cynomys gunnisoni (Gunnison's prairie dog).